The primary structure comprises 294 residues: 4-hydroxy-tetrahydrodipicolinate synthase (294 aa).

Thr-47 serves as a coordination point for pyruvate. Tyr-135 serves as the catalytic Proton donor/acceptor. Lys-163 (schiff-base intermediate with substrate) is an active-site residue. Residue Ile-205 participates in pyruvate binding.

This sequence belongs to the DapA family. Homotetramer; dimer of dimers.

It is found in the cytoplasm. It catalyses the reaction L-aspartate 4-semialdehyde + pyruvate = (2S,4S)-4-hydroxy-2,3,4,5-tetrahydrodipicolinate + H2O + H(+). It functions in the pathway amino-acid biosynthesis; L-lysine biosynthesis via DAP pathway; (S)-tetrahydrodipicolinate from L-aspartate: step 3/4. Its function is as follows. Catalyzes the condensation of (S)-aspartate-beta-semialdehyde [(S)-ASA] and pyruvate to 4-hydroxy-tetrahydrodipicolinate (HTPA). In Rickettsia prowazekii (strain Madrid E), this protein is 4-hydroxy-tetrahydrodipicolinate synthase.